The primary structure comprises 548 residues: Alpha-1,3-mannosyl-glycoprotein 4-beta-N-acetylglucosaminyltransferase B (548 aa).

The Cytoplasmic segment spans residues 1–7; it reads MRLRNGT. Residues 8–28 form a helical; Signal-anchor for type II membrane protein membrane-spanning segment; it reads FLTLLLFCLCAFLSLSWYAAL. Over 29–548 the chain is Lumenal; that stretch reads SGQKGDVVDV…LSEIFLKKAD (520 aa). Residues 36 to 83 are a coiled coil; that stretch reads VDVYQREFLALRDRLHAAEQESLKRSKELNLVLDEIKRAVSERQALRD. N-linked (GlcNAc...) asparagine glycosylation is found at Asn-87 and Asn-103.

Belongs to the glycosyltransferase 54 family. As to quaternary structure, interacts with SLC35A3. The cofactor is a divalent metal cation. N-glycosylated. As to expression, widely expressed. Strongly overexpressed in pancreatic cancer.

The protein localises to the golgi apparatus membrane. The catalysed reaction is an N(4)-{beta-D-GlcNAc-(1-&gt;2)-alpha-D-Man-(1-&gt;3)-[alpha-D-Man-(1-&gt;6)]-beta-D-Man-(1-&gt;4)-beta-D-GlcNAc-(1-&gt;4)-beta-D-GlcNAc}-L-asparaginyl-[protein] + UDP-N-acetyl-alpha-D-glucosamine = an N(4)-{beta-D-GlcNAc-(1-&gt;2)-[beta-D-GlcNAc-(1-&gt;4)]-alpha-D-Man-(1-&gt;3)-[alpha-D-Man-(1-&gt;6)]-beta-D-Man-(1-&gt;4)-beta-D-GlcNAc-(1-&gt;4)-beta-D-GlcNAc}-L-asparaginyl-[protein] + UDP + H(+). It catalyses the reaction N(4)-{beta-D-GlcNAc-(1-&gt;2)-alpha-D-Man-(1-&gt;3)-[beta-D-GlcNAc-(1-&gt;2)-alpha-D-Man-(1-&gt;6)]-beta-D-Man-(1-&gt;4)-beta-D-GlcNAc-(1-&gt;4)-beta-D-GlcNAc}-L-asparaginyl-[protein] + UDP-N-acetyl-alpha-D-glucosamine = N(4)-{beta-D-GlcNAc-(1-&gt;2)-[beta-D-GlcNAc-(1-&gt;4)]-alpha-D-Man-(1-&gt;3)-[beta-D-GlcNAc-(1-&gt;2)-alpha-D-Man-(1-&gt;6)]-beta-D-Man-(1-&gt;4)-beta-D-GlcNAc-(1-&gt;4)-beta-D-GlcNAc}-L-asparaginyl-[protein] + UDP + H(+). It carries out the reaction an N(4)-{beta-D-GlcNAc-(1-&gt;2)-alpha-D-Man-(1-&gt;3)-[beta-D-GlcNAc-(1-&gt;2)-[beta-D-GlcNAc-(1-&gt;6)]-alpha-D-Man-(1-&gt;6)]-beta-D-Man-(1-&gt;4)-beta-D-GlcNAc-(1-&gt;4)-beta-D-GlcNAc}-L-asparaginyl-[protein] + UDP-N-acetyl-alpha-D-glucosamine = an N(4)-{beta-D-GlcNAc-(1-&gt;2)-[beta-D-GlcNAc-(1-&gt;4)]-alpha-D-Man-(1-&gt;3)-[beta-D-GlcNAc-(1-&gt;2)-[beta-D-GlcNAc-(1-&gt;6)]-alpha-D-Man-(1-&gt;6)]-beta-D-Man-(1-&gt;4)-beta-D-GlcNAc-(1-&gt;4)-beta-D-GlcNAc}-L-asparaginyl-[protein] + UDP + H(+). The enzyme catalyses an N(4)-{beta-D-GlcNAc-(1-&gt;2)-alpha-D-Man-(1-&gt;3)-[beta-D-GlcNAc-(1-&gt;2)-alpha-D-Man-(1-&gt;6)]-beta-D-Man-(1-&gt;4)-beta-D-GlcNAc-(1-&gt;4)-[alpha-L-Fuc-(1-&gt;6)]-beta-D-GlcNAc}-L-asparaginyl-[protein] + UDP-N-acetyl-alpha-D-glucosamine = N(4)-{beta-D-GlcNAc-(1-&gt;2)-[beta-D-GlcNAc-(1-&gt;4)]-alpha-D-Man-(1-&gt;3)-[beta-D-GlcNAc-(1-&gt;2)-alpha-D-Man-(1-&gt;6)]-beta-D-Man-(1-&gt;4)-beta-D-GlcNAc-(1-&gt;4)-[alpha-L-Fuc-(1-&gt;6)]-beta-D-GlcNAc}-asparaginyl-[protein] + UDP + H(+). The catalysed reaction is an N(4)-{beta-D-GlcNAc-(1-&gt;2)-alpha-D-Man-(1-&gt;3)-[beta-D-Gal-(1-&gt;4)-beta-D-GlcNAc-(1-&gt;2)-alpha-D-Man-(1-&gt;6)]-beta-D-Man-(1-&gt;4)-beta-D-GlcNAc-(1-&gt;4)-beta-D-GlcNAc}-L-asparaginyl-[protein] + UDP-N-acetyl-alpha-D-glucosamine = an N(4)-{beta-D-GlcNAc-(1-&gt;2)-[beta-D-GlcNAc-(1-&gt;4)]-alpha-D-Man-(1-&gt;3)-[beta-D-Gal-(1-&gt;4)-beta-D-GlcNAc-(1-&gt;2)-alpha-D-Man-(1-&gt;6)]-beta-D-Man-(1-&gt;4)-beta-D-GlcNAc-(1-&gt;4)-beta-D-GlcNAc}-L-asparaginyl-[protein] + UDP + H(+). It catalyses the reaction N(4)-{beta-D-GlcNAc-(1-&gt;2)-alpha-D-Man-(1-&gt;3)-[alpha-D-Man-(1-&gt;3)-{alpha-D-Man-(1-&gt;6)}-alpha-D-Man-(1-&gt;6)]-beta-D-Man-(1-&gt;4)-beta-D-GlcNAc-(1-&gt;4)-beta-D-GlcNAc}-asparaginyl-[protein] + UDP-N-acetyl-alpha-D-glucosamine = N(4)-{beta-D-GlcNAc-(1-&gt;2)-[beta-D-GlcNAc-(1-&gt;4)]-alpha-D-Man-(1-&gt;3)-[alpha-D-Man-(1-&gt;3)-{alpha-D-Man-(1-&gt;6)}-alpha-D-Man-(1-&gt;6)]-beta-D-Man-(1-&gt;4)-beta-D-GlcNAc-(1-&gt;4)-beta-D-GlcNAc}-asparaginyl-[protein] + UDP + H(+). It carries out the reaction N(4)-{beta-D-GlcNAc-(1-&gt;2)-alpha-D-Man-(1-&gt;3)-beta-D-Man-(1-&gt;4)-beta-D-GlcNAc-(1-&gt;4)-beta-D-GlcNAc}-asparaginyl-[protein] + UDP-N-acetyl-alpha-D-glucosamine = N(4)-{beta-D-GlcNAc-(1-&gt;2)-[beta-D-GlcNAc-(1-&gt;4)]-alpha-D-Man-(1-&gt;3)-beta-D-Man-(1-&gt;4)-beta-D-GlcNAc-(1-&gt;4)-beta-D-GlcNAc}-asparaginyl-[protein] + UDP + H(+). The protein operates within protein modification; protein glycosylation. Its function is as follows. Glycosyltransferase that catalyzes the transfer of GlcNAc from UDP-GlcNAc to the GlcNAcbeta1-2Manalpha1-3 arm of the core structure of N-linked glycans through a beta1-4 linkage and participates in the production of tri- and tetra-antennary N-linked sugar chains. Prefers complex-type N-glycans over hybrid-types. Has lower affinities for donors or acceptors than MGAT4A, suggesting that, under physiological conditions, it is not the main contributor in N-glycan biosynthesis. In Homo sapiens (Human), this protein is Alpha-1,3-mannosyl-glycoprotein 4-beta-N-acetylglucosaminyltransferase B.